Consider the following 168-residue polypeptide: Small ribosomal subunit protein uS5 (168 aa).

The region spanning 13-76 (LQEKLIAVNR…EKARRNMVTV (64 aa)) is the S5 DRBM domain.

It belongs to the universal ribosomal protein uS5 family. Part of the 30S ribosomal subunit. Contacts proteins S4 and S8.

Its function is as follows. With S4 and S12 plays an important role in translational accuracy. Functionally, located at the back of the 30S subunit body where it stabilizes the conformation of the head with respect to the body. This is Small ribosomal subunit protein uS5 from Shewanella amazonensis (strain ATCC BAA-1098 / SB2B).